Consider the following 366-residue polypeptide: MRVLAAMSGGVDSAVAAARAVAAGHDVVGVHLALSQDPQTVRESSRGCCSLEDSADARRVCDKLGIPFYVWDFSDRFKEDVIDDFISSYEAGETPNPCLRCNEKIKFAALLERGIALGFDAVVTGHYARLTQPVDGGDGYLRRSIDPDKDQSYVLGVLGAHEIAHCMFPVGDTVKPKIREEAAAMGFSVAKKPDSYDICFIPDGNTQAFLGRHIGLRPGMIVDSDGNELKEHDGAWNYTIGQRKGLDIKQPAADGKPRYVTNIDAATGTVTVGSRENLKVIALTADRLKYLHPAMTGSFEAEVQVRAHGSVVACSVMVNESDDTMRVELHTPLSGVARGQAAVIYLPDDDGDIVLGSGTICATEHQ.

Residues 6–13 (AMSGGVDS) and Leu-32 contribute to the ATP site. The active-site Nucleophile is Cys-101. An intrachain disulfide couples Cys-101 to Cys-199. Residue Gly-125 participates in ATP binding. The segment at 149-151 (KDQ) is interaction with tRNA. The active-site Cysteine persulfide intermediate is Cys-199.

It belongs to the MnmA/TRMU family.

It is found in the cytoplasm. It catalyses the reaction S-sulfanyl-L-cysteinyl-[protein] + uridine(34) in tRNA + AH2 + ATP = 2-thiouridine(34) in tRNA + L-cysteinyl-[protein] + A + AMP + diphosphate + H(+). In terms of biological role, catalyzes the 2-thiolation of uridine at the wobble position (U34) of tRNA, leading to the formation of s(2)U34. The chain is tRNA-specific 2-thiouridylase MnmA from Corynebacterium diphtheriae (strain ATCC 700971 / NCTC 13129 / Biotype gravis).